Here is a 201-residue protein sequence, read N- to C-terminus: Small ribosomal subunit protein uS4c (201 aa).

Residues 89-150 (MRLDNILFRL…KQRSKVLIQN (62 aa)) enclose the S4 RNA-binding domain.

Belongs to the universal ribosomal protein uS4 family. As to quaternary structure, part of the 30S ribosomal subunit. Contacts protein S5. The interaction surface between S4 and S5 is involved in control of translational fidelity.

Its subcellular location is the plastid. It is found in the chloroplast. In terms of biological role, one of the primary rRNA binding proteins, it binds directly to 16S rRNA where it nucleates assembly of the body of the 30S subunit. With S5 and S12 plays an important role in translational accuracy. The polypeptide is Small ribosomal subunit protein uS4c (rps4) (Acorus calamus (Sweet flag)).